The chain runs to 354 residues: Probable L-ascorbate-6-phosphate lactonase UlaG (354 aa).

This sequence belongs to the UlaG family. A divalent metal cation is required as a cofactor.

The protein localises to the cytoplasm. It carries out the reaction L-ascorbate 6-phosphate + H2O = 3-dehydro-L-gulonate 6-phosphate. The protein operates within cofactor degradation; L-ascorbate degradation; D-xylulose 5-phosphate from L-ascorbate: step 1/4. In terms of biological role, probably catalyzes the hydrolysis of L-ascorbate-6-P into 3-keto-L-gulonate-6-P. Is essential for L-ascorbate utilization under anaerobic conditions. The protein is Probable L-ascorbate-6-phosphate lactonase UlaG of Shigella boydii serotype 18 (strain CDC 3083-94 / BS512).